A 2439-amino-acid chain; its full sequence is Mucin-6 (2439 aa).

Positions 1-22 are cleaved as a signal peptide; sequence MVQRWLLLSCCGALLSAGLANT. The VWFD 1 domain maps to 43–214; sequence GQCSTWGAGH…KLDDPGEICT (172 aa). Intrachain disulfides connect Cys-45–Cys-176 and Cys-67–Cys-213. Asn-268 is a glycosylation site (N-linked (GlcNAc...) asparagine). Residues 302-357 enclose the TIL domain; it reads CPANQVYQECGSACVKTCSNPQHSCSSSCTFGCFCPEGTVLNDLSNNHTCVPVTQC. Residues 395–579 form the VWFD 2 domain; sequence GHCSLEGGSF…ALERETDPCS (185 aa). Disulfide bonds link Cys-397/Cys-533 and Cys-419/Cys-578. Residues Asn-486 and Asn-659 are each glycosylated (N-linked (GlcNAc...) asparagine). Positions 866 to 1038 constitute a VWFD 3 domain; the sequence is STCTLYGEGH…NSWKESPLCG (173 aa). Cystine bridges form between Cys-868-Cys-1002, Cys-890-Cys-1037, Cys-899-Cys-999, and Cys-917-Cys-924. 2 N-linked (GlcNAc...) asparagine glycosylation sites follow: Asn-975 and Asn-1179. Disordered regions lie at residues 1202–1455, 1471–1626, 1642–1834, 1868–1983, 2033–2077, 2090–2196, 2233–2278, and 2323–2348; these read PQPP…TSLV, ATSA…LVTP, SASI…HPHT, SIHS…STGP, ATSA…THSS, SSSW…SASP, VSPT…SLTT, and LTAHGSTPASAPVSSLGTPTPTSPGV. Low complexity predominate over residues 1224-1265; it reads TGTSTTIGLLSSTGPSPSSNHTPASPTQTPLLPATLTSSKPT. The span at 1276-1286 shows a compositional bias: polar residues; it reads TAVTPQATSGL. A compositionally biased stretch (low complexity) spans 1294 to 1339; sequence STATKPTVTQATTRATASTASPATTSTAQSTTRTTMTLPTPATSGT. The segment covering 1340–1351 has biased composition (polar residues); sequence SPTLPKSTNQEL. Low complexity-rich tracts occupy residues 1352-1373 and 1381-1415; these read PGTTATQTTGPRPTPASTTGPT and TRPTATETTQTRTTTEYTTPQTPHTTHSPPTAGSP. Composition is skewed to polar residues over residues 1416–1455, 1471–1481, and 1490–1520; these read VPSTGPVTATSFHATTTYPTPSHPETTLPTHVPPFSTSLV, ATSASNHSAPT, and LKATGSTHTAPPITPTTSGTSQAHSSFSTNK. Low complexity-rich tracts occupy residues 1521 to 1567 and 1574 to 1611; these read TPTS…ATSS and TTHSPPTGSSPFSSTGPMTATSFKTTTTYPTPSHPQTT. The 1; truncated repeat unit spans residues 1561–1738; the sequence is TNSATSSRPP…TTSGTSQSRS (178 aa). An approximate repeats region spans residues 1607-1953; it reads HPQTTLPTHV…STGTRTPVAH (347 aa). The span at 1659-1686 shows a compositional bias: polar residues; that stretch reads LKATGSTHTAPTMTLTTSGTSQALSSLN. Residues 1687 to 1768 are compositionally biased toward low complexity; the sequence is TAKTSTSLHS…PEVTSTSTTS (82 aa). Residues 1769–1793 are compositionally biased toward polar residues; that stretch reads ITPNHTSTGTRTPVAHTTSATSSRL. Repeat unit 2 spans residues 1785–1953; sequence TTSATSSRLP…STGTRTPVAH (169 aa). Low complexity-rich tracts occupy residues 1794-1834 and 1891-1917; these read PTPF…HPHT and TAPPMTPTTSGTSQSPSSFSTAKTSTS. The segment covering 1918–1962 has biased composition (polar residues); that stretch reads LPYHTSSTHHPEVTPTSTTNITPKHTSTGTRTPVAHTTSASSSRL. Residues 1963–1983 are compositionally biased toward low complexity; sequence PTPFTTHSPPTGSSPFSSTGP. The span at 2052–2070 shows a compositional bias: polar residues; it reads LKATGSTHTAPPMTVTTSG. Low complexity predominate over residues 2090 to 2102; sequence SSSWLPQNSSSRP. Over residues 2107–2120 the composition is skewed to polar residues; it reads ITTQLPHLSSATTP. Over residues 2121–2196 the composition is skewed to low complexity; that stretch reads VSTTNQLSSS…PTTASVSASP (76 aa). Positions 2240 to 2264 are enriched in polar residues; that stretch reads HLASSTIAFPSTPRTTASTHTAPAF. A compositionally biased stretch (low complexity) spans 2265 to 2278; it reads SSQSTTSRSTSLTT. Residues 2323-2347 are compositionally biased toward polar residues; that stretch reads LTAHGSTPASAPVSSLGTPTPTSPG. Disulfide bonds link Cys-2349–Cys-2396, Cys-2363–Cys-2410, Cys-2372–Cys-2430, and Cys-2376–Cys-2432. Residues 2349 to 2438 enclose the CTCK domain; the sequence is CSVREQQEEI…HCVCSSVACG (90 aa).

Multimer; disulfide-linked. Post-translationally, O-glycosylated. In terms of tissue distribution, expressed in the regenerative zone of gastric antrum, gastric body mucosa and gastric incisura mucosa. Expressed in the deeper mucous glands of gastric antrum. Overexpressed in Helicobacter pylori infected gastric epithelium. Highly expressed in duodenal Brunner's glands, gall bladder, seminal vesicle, pancreatic centroacinar cells and ducts, and periductal glands of the common bile duct.

Its subcellular location is the secreted. In terms of biological role, may provide a mechanism for modulation of the composition of the protective mucus layer related to acid secretion or the presence of bacteria and noxious agents in the lumen. Plays an important role in the cytoprotection of epithelial surfaces and are used as tumor markers in a variety of cancers. May play a role in epithelial organogenesis. This chain is Mucin-6 (MUC6), found in Homo sapiens (Human).